Reading from the N-terminus, the 121-residue chain is Met-lysine-1b (121 aa).

The N-terminal stretch at 1-22 (MKSFVFALALIVAFACISESKS) is a signal peptide. Positions 23-69 (DHTGYEEEENLEDSELTDLVAAALLEELAEASEMDDLSYTEEAGGER) are excised as a propeptide. Met-120 carries the post-translational modification Methionine amide.

As to expression, expressed by the venom gland.

It is found in the secreted. Shows no antimicrobial activity against Gram-positive bacterium B.subtilis B-501 or Gram-negative bacterium E.coli DH5-alpha at concentrations up to 20 ug/ml. Shows no toxicity towards insect (S.carnaria) larvae. This chain is Met-lysine-1b, found in Lachesana tarabaevi (Spider).